A 340-amino-acid chain; its full sequence is Ava biosynthesis cluster protein G (340 aa).

Transmembrane regions (helical) follow at residues 15 to 35 (WSAF…NIWN), 81 to 101 (FMIS…LQFV), 118 to 138 (AFFV…VHAF), and 148 to 168 (LSIM…FLCI). Asn171 is a glycosylation site (N-linked (GlcNAc...) asparagine). Helical transmembrane passes span 219-239 (FSSV…YVAF) and 315-335 (SALT…WLQI).

It is found in the membrane. The protein operates within secondary metabolite biosynthesis. Functionally, part of the cluster that mediates the biosynthesis of a highly modified cyclo-arginine-tryptophan dipeptide (cRW). The first step of the pathway is perfornmed by the arginine-containing cyclodipeptide synthase (RCPDS) avaA that acts as the scaffold-generating enzyme and is responsible for formation of the cyclo-Arg-Trp (cRW) diketopiperazine. AvaB then acts as a multifunctional flavoenzyme that is responsible for generating the cyclo-Arg-formylkynurenine DKP, which can be deformylated by avaC. AvaB then further catalyzes an additional N-oxidation followed by cyclization and dehydration. The next step is an N-acetylation of the guanidine group catalyzed by the arginine N-acetyltransferase avaD. The roles of the additional enzymes identified within the ava cluster still have to be determined. This is Ava biosynthesis cluster protein G from Aspergillus versicolor.